A 961-amino-acid polypeptide reads, in one-letter code: IQ motif and SEC7 domain-containing protein 1 (961 aa).

Residues 21-113 (SGVEGEAPSS…SLSESYELSS (93 aa)) form a disordered region. Residues 29-38 (SSETGTSLDS) show a composition bias toward polar residues. 3 positions are modified to phosphoserine: Ser-88, Ser-104, and Ser-106. Residues 133 to 162 (TRHAARTIQTAFRQYQMNKNFERLRSSMSE) enclose the IQ domain. Ser-179, Ser-247, and Ser-251 each carry phosphoserine. 3 disordered regions span residues 263–291 (SEEV…HRKL), 310–332 (LSPP…DLRL), and 347–515 (KEDK…DSPA). Residues 272–291 (ARARDTEPKPGLHGMDHRKL) are compositionally biased toward basic and acidic residues. 2 stretches are compositionally biased toward basic and acidic residues: residues 364–374 (ERPEPRLRVEH) and 428–444 (LPRE…RPLE). Over residues 469-487 (DSINSTSNSNDTINCSSES) the composition is skewed to low complexity. Residues Ser-510 and Ser-513 each carry the phosphoserine modification. The SEC7 domain occupies 515–708 (AFSNDVIRKR…IGIYERIRKR (194 aa)). The PH domain occupies 772–864 (HQREIFLFND…LRESVAEVQE (93 aa)). Residues 846–877 (QDRKKFTDDLRESVAEVQEMEKHRIESELEKQ) adopt a coiled-coil conformation. Ser-890 carries the post-translational modification Phosphoserine. Phosphotyrosine is present on Tyr-909. A disordered region spans residues 920–961 (LSSSLRDLSEAGKRGRRSSAGSLESNVEFQPFQPPQPPVLCS). 2 positions are modified to phosphoserine: Ser-922 and Ser-923. Positions 938 to 947 (SAGSLESNVE) are enriched in polar residues. Over residues 951–961 (FQPPQPPVLCS) the composition is skewed to pro residues.

It belongs to the BRAG family. In terms of assembly, interacts with ARF1 and ARF6. Interacts with GRIA2; the interaction is required for ARF6 activation. Expressed in hippocampus.

Its subcellular location is the cytoplasm. It localises to the nucleus. It is found in the postsynaptic density. The protein resides in the cytoplasmic vesicle. The protein localises to the secretory vesicle. Its subcellular location is the synaptic vesicle. In terms of biological role, guanine nucleotide exchange factor for ARF1 and ARF6. Guanine nucleotide exchange factor activity is enhanced by lipid binding. Accelerates GTP binding by ARFs of all three classes. Guanine nucleotide exchange protein for ARF6, mediating internalization of beta-1 integrin. Involved in neuronal development. In neurons, plays a role in the control of vesicle formation by endocytoc cargo. Upon long term depression, interacts with GRIA2 and mediates the activation of ARF6 to internalize synaptic AMPAR receptors. This is IQ motif and SEC7 domain-containing protein 1 (Iqsec1) from Mus musculus (Mouse).